The chain runs to 260 residues: Ribonuclease PH (260 aa).

Phosphate-binding positions include Arg-88 and 126–128 (GTR).

The protein belongs to the RNase PH family. In terms of assembly, homohexameric ring arranged as a trimer of dimers.

The catalysed reaction is tRNA(n+1) + phosphate = tRNA(n) + a ribonucleoside 5'-diphosphate. Functionally, phosphorolytic 3'-5' exoribonuclease that plays an important role in tRNA 3'-end maturation. Removes nucleotide residues following the 3'-CCA terminus of tRNAs; can also add nucleotides to the ends of RNA molecules by using nucleoside diphosphates as substrates, but this may not be physiologically important. Probably plays a role in initiation of 16S rRNA degradation (leading to ribosome degradation) during starvation. The protein is Ribonuclease PH of Mycolicibacterium gilvum (strain PYR-GCK) (Mycobacterium gilvum (strain PYR-GCK)).